The primary structure comprises 60 residues: Large ribosomal subunit protein uL30 (60 aa).

It belongs to the universal ribosomal protein uL30 family. In terms of assembly, part of the 50S ribosomal subunit.

This Streptococcus pyogenes serotype M1 protein is Large ribosomal subunit protein uL30.